We begin with the raw amino-acid sequence, 856 residues long: Glucans biosynthesis glucosyltransferase H (856 aa).

6 helical membrane-spanning segments follow: residues 144–164, 198–218, 517–537, 574–594, 608–628, and 684–704; these read ILLVLMLGQTIVAGWYMKGIM, ILILFGILFCWVSAGFWTALM, VFLTGVMSYLSAPLWFFFLVL, LFSTTIVLLFLPKLLSIILIW, TLSMLLEMLFSMLLAPVRMIF, and FLWWLVPIVGSLMLSIPVSVI.

The protein belongs to the glycosyltransferase 2 family. OpgH subfamily.

The protein resides in the cell inner membrane. It functions in the pathway glycan metabolism; osmoregulated periplasmic glucan (OPG) biosynthesis. In terms of biological role, involved in the biosynthesis of osmoregulated periplasmic glucans (OPGs). This Pseudomonas fluorescens (strain ATCC BAA-477 / NRRL B-23932 / Pf-5) protein is Glucans biosynthesis glucosyltransferase H.